Reading from the N-terminus, the 276-residue chain is Large ribosomal subunit protein uL2 (276 aa).

Residues 211-276 form a disordered region; it reads RNRHRGIRPQ…KLIISRRKGK (66 aa). Positions 230–240 are enriched in basic and acidic residues; the sequence is DHPHGGGEGKK.

The protein belongs to the universal ribosomal protein uL2 family. In terms of assembly, part of the 50S ribosomal subunit. Forms a bridge to the 30S subunit in the 70S ribosome.

Functionally, one of the primary rRNA binding proteins. Required for association of the 30S and 50S subunits to form the 70S ribosome, for tRNA binding and peptide bond formation. It has been suggested to have peptidyltransferase activity; this is somewhat controversial. Makes several contacts with the 16S rRNA in the 70S ribosome. The polypeptide is Large ribosomal subunit protein uL2 (Campylobacter jejuni subsp. doylei (strain ATCC BAA-1458 / RM4099 / 269.97)).